Here is a 364-residue protein sequence, read N- to C-terminus: tRNA 2-selenouridine synthase (364 aa).

A Rhodanese domain is found at 14–137 (LLADTPLIDV…LRQTAIQATW (124 aa)). The active-site S-selanylcysteine intermediate is Cys-97.

It belongs to the SelU family. Monomer.

It carries out the reaction 5-methylaminomethyl-2-thiouridine(34) in tRNA + selenophosphate + (2E)-geranyl diphosphate + H2O + H(+) = 5-methylaminomethyl-2-selenouridine(34) in tRNA + (2E)-thiogeraniol + phosphate + diphosphate. The catalysed reaction is 5-methylaminomethyl-2-thiouridine(34) in tRNA + (2E)-geranyl diphosphate = 5-methylaminomethyl-S-(2E)-geranyl-thiouridine(34) in tRNA + diphosphate. The enzyme catalyses 5-methylaminomethyl-S-(2E)-geranyl-thiouridine(34) in tRNA + selenophosphate + H(+) = 5-methylaminomethyl-2-(Se-phospho)selenouridine(34) in tRNA + (2E)-thiogeraniol. It catalyses the reaction 5-methylaminomethyl-2-(Se-phospho)selenouridine(34) in tRNA + H2O = 5-methylaminomethyl-2-selenouridine(34) in tRNA + phosphate. Involved in the post-transcriptional modification of the uridine at the wobble position (U34) of tRNA(Lys), tRNA(Glu) and tRNA(Gln). Catalyzes the conversion of 2-thiouridine (S2U-RNA) to 2-selenouridine (Se2U-RNA). Acts in a two-step process involving geranylation of 2-thiouridine (S2U) to S-geranyl-2-thiouridine (geS2U) and subsequent selenation of the latter derivative to 2-selenouridine (Se2U) in the tRNA chain. This Salmonella typhi protein is tRNA 2-selenouridine synthase.